A 244-amino-acid chain; its full sequence is Octanoyltransferase (244 aa).

In terms of domain architecture, BPL/LPL catalytic spans 49–237; that stretch reads VAPGNFLIFC…HLTALFELHI (189 aa). Residues 94–101, 167–169, and 180–182 contribute to the substrate site; these read RGGDITYH, AMG, and GFA. C198 serves as the catalytic Acyl-thioester intermediate.

This sequence belongs to the LipB family.

The protein resides in the cytoplasm. The catalysed reaction is octanoyl-[ACP] + L-lysyl-[protein] = N(6)-octanoyl-L-lysyl-[protein] + holo-[ACP] + H(+). It participates in protein modification; protein lipoylation via endogenous pathway; protein N(6)-(lipoyl)lysine from octanoyl-[acyl-carrier-protein]: step 1/2. Functionally, catalyzes the transfer of endogenously produced octanoic acid from octanoyl-acyl-carrier-protein onto the lipoyl domains of lipoate-dependent enzymes. Lipoyl-ACP can also act as a substrate although octanoyl-ACP is likely to be the physiological substrate. The sequence is that of Octanoyltransferase from Cytophaga hutchinsonii (strain ATCC 33406 / DSM 1761 / CIP 103989 / NBRC 15051 / NCIMB 9469 / D465).